Reading from the N-terminus, the 765-residue chain is Probable beta-glucosidase M (765 aa).

The first 19 residues, 1–19 (MHSISALLSLLGGLALSSA), serve as a signal peptide directing secretion. N-linked (GlcNAc...) asparagine glycosylation is found at Asn24, Asn71, Asn93, Asn126, and Asn258. Asp286 is a catalytic residue. N-linked (GlcNAc...) asparagine glycans are attached at residues Asn314, Asn321, Asn432, Asn519, Asn541, and Asn647.

Belongs to the glycosyl hydrolase 3 family.

It localises to the secreted. The catalysed reaction is Hydrolysis of terminal, non-reducing beta-D-glucosyl residues with release of beta-D-glucose.. It functions in the pathway glycan metabolism; cellulose degradation. Beta-glucosidases are one of a number of cellulolytic enzymes involved in the degradation of cellulosic biomass. Catalyzes the last step releasing glucose from the inhibitory cellobiose. This chain is Probable beta-glucosidase M (bglM), found in Aspergillus niger (strain ATCC MYA-4892 / CBS 513.88 / FGSC A1513).